The chain runs to 347 residues: MAVPITVLDCDLLLYGRGHRTLDRFRLDDVTDDYLVTTYGFPRPFIDYLVDLLGASLSRPTHRSRAISPETQIMAALGFYTSGSFQTRMGDTIGISQASMSRCVTNVTEALVERASQFISFPRDERSVQGLKDEFYNLAGVPGVLGVVDCTQVNIKAPNSEDLSYVNSRGLHSLNCLLVCDARGSLLWAETSRLGSMQDNAVLHQSELSGLFETKMHKQGWLLADNAFILRPWLMTPVQIPESPSDYRYNMAHTATHSVMERTQRSLRLRFRCLDGSRATLQYSPEKSAQIVLACCILHNIALQHDLDIVSESGATSLEPEEECVHMEPLESEAYRMRQELILTHFS.

The region spanning 148 to 300 (VDCTQVNIKA…IVLACCILHN (153 aa)) is the DDE Tnp4 domain. A divalent metal cation contacts are provided by Asp149, Asp199, Asp225, and Glu261.

This sequence belongs to the HARBI1 family. The cofactor is a divalent metal cation. As to expression, detected in adult eye and in embryo.

The protein localises to the nucleus. Its subcellular location is the cytoplasm. Functionally, transposase-derived protein that may have nuclease activity (Potential). Does not have transposase activity. The chain is Putative nuclease HARBI1 (harbi1) from Xenopus laevis (African clawed frog).